The primary structure comprises 189 residues: Pyridoxal 5'-phosphate synthase subunit PdxT (189 aa).

47–49 (GES) serves as a coordination point for L-glutamine. The Nucleophile role is filled by Cys79. L-glutamine-binding positions include Arg106 and 135–136 (IR). Residues His171 and Glu173 each act as charge relay system in the active site.

This sequence belongs to the glutaminase PdxT/SNO family. In terms of assembly, in the presence of PdxS, forms a dodecamer of heterodimers. Only shows activity in the heterodimer.

The enzyme catalyses aldehydo-D-ribose 5-phosphate + D-glyceraldehyde 3-phosphate + L-glutamine = pyridoxal 5'-phosphate + L-glutamate + phosphate + 3 H2O + H(+). It carries out the reaction L-glutamine + H2O = L-glutamate + NH4(+). It functions in the pathway cofactor biosynthesis; pyridoxal 5'-phosphate biosynthesis. Its function is as follows. Catalyzes the hydrolysis of glutamine to glutamate and ammonia as part of the biosynthesis of pyridoxal 5'-phosphate. The resulting ammonia molecule is channeled to the active site of PdxS. This is Pyridoxal 5'-phosphate synthase subunit PdxT from Caldanaerobacter subterraneus subsp. tengcongensis (strain DSM 15242 / JCM 11007 / NBRC 100824 / MB4) (Thermoanaerobacter tengcongensis).